We begin with the raw amino-acid sequence, 289 residues long: Shikimate dehydrogenase (NADP(+)) (289 aa).

Shikimate contacts are provided by residues 20–22 (SIS) and Ser-67. The Proton acceptor role is filled by Lys-71. Asn-92 and Asp-107 together coordinate shikimate. Residues 132 to 136 (GGGGA) and Val-230 contribute to the NADP(+) site. Tyr-232 lines the shikimate pocket. Gly-253 is a binding site for NADP(+).

Belongs to the shikimate dehydrogenase family. Homodimer.

It catalyses the reaction shikimate + NADP(+) = 3-dehydroshikimate + NADPH + H(+). The protein operates within metabolic intermediate biosynthesis; chorismate biosynthesis; chorismate from D-erythrose 4-phosphate and phosphoenolpyruvate: step 4/7. Functionally, involved in the biosynthesis of the chorismate, which leads to the biosynthesis of aromatic amino acids. Catalyzes the reversible NADPH linked reduction of 3-dehydroshikimate (DHSA) to yield shikimate (SA). In Streptococcus mutans serotype c (strain ATCC 700610 / UA159), this protein is Shikimate dehydrogenase (NADP(+)).